The following is a 299-amino-acid chain: Ficolin-3 (299 aa).

The first 23 residues, 1–23, serve as a signal peptide directing secretion; sequence MDLLWILPSLWLLLLGGPACLKT. The interval 44–81 is disordered; the sequence is PSCPGAPGSPGEKGAPGPQGPPGPPGKMGPKGEPGDPV. The Collagen-like domain maps to 48–80; it reads GAPGSPGEKGAPGPQGPPGPPGKMGPKGEPGDP. 6 positions are modified to hydroxyproline: P50, P53, P59, P65, P68, and P77. Residues 61 to 70 are compositionally biased toward pro residues; sequence PQGPPGPPGK. One can recognise a Fibrinogen C-terminal domain in the interval 84–299; sequence LRCQEGPRNC…PYRRVRMMLR (216 aa). Cystine bridges form between C86-C110 and C93-C121. An N-linked (GlcNAc...) (complex) asparagine glycan is attached at N189. D237, D239, S241, and S243 together coordinate Ca(2+). The cysteines at positions 245 and 258 are disulfide-linked. Residue 258 to 259 coordinates a carbohydrate; it reads CY.

Belongs to the ficolin lectin family. As to quaternary structure, homotrimer. May form an octadecamer consisting of an elementary trimer unit. Does not interact with fibronectin, elastin or zymosan. Interacts with MASP1 and MASP2. Post-translationally, the N-terminus is blocked. Liver and lung. In liver it is produced by bile duct epithelial cells and hepatocytes. In lung it is produced by both ciliated bronchial epithelial cells and type II alveolar epithelial cells.

Its subcellular location is the secreted. Functionally, may function in innate immunity through activation of the lectin complement pathway. Calcium-dependent and GlcNAc-binding lectin. Has affinity with GalNAc, GlcNAc, D-fucose, as mono/oligosaccharide and lipopolysaccharides from S.typhimurium and S.minnesota. This Homo sapiens (Human) protein is Ficolin-3 (FCN3).